The chain runs to 141 residues: Large ribosomal subunit protein uL11 (141 aa).

The protein belongs to the universal ribosomal protein uL11 family. As to quaternary structure, part of the ribosomal stalk of the 50S ribosomal subunit. Interacts with L10 and the large rRNA to form the base of the stalk. L10 forms an elongated spine to which L12 dimers bind in a sequential fashion forming a multimeric L10(L12)X complex. One or more lysine residues are methylated.

Its function is as follows. Forms part of the ribosomal stalk which helps the ribosome interact with GTP-bound translation factors. This chain is Large ribosomal subunit protein uL11, found in Chlamydia pneumoniae (Chlamydophila pneumoniae).